A 249-amino-acid chain; its full sequence is Major phosphate-irrepressible acid phosphatase (249 aa).

The N-terminal stretch at 1–20 is a signal peptide; that stretch reads MKKNIIAGCLFSLFSLSALA.

Belongs to the class A bacterial acid phosphatase family. As to quaternary structure, homotetramer.

The protein resides in the periplasm. The catalysed reaction is a phosphate monoester + H2O = an alcohol + phosphate. This chain is Major phosphate-irrepressible acid phosphatase (phoC), found in Morganella morganii (Proteus morganii).